Reading from the N-terminus, the 395-residue chain is RNA ligase 1 (395 aa).

ATP-binding residues include Y48, R65, and K83. Residue K113 is the N6-AMP-lysine intermediate of the active site. 3 residues coordinate ATP: E173, K255, and K257. D285 is a binding site for Mg(2+).

Mg(2+) serves as cofactor. Mn(2+) is required as a cofactor.

The enzyme catalyses ATP + (ribonucleotide)n-3'-hydroxyl + 5'-phospho-(ribonucleotide)m = (ribonucleotide)n+m + AMP + diphosphate.. RNA ligase that ligates single-stranded nucleic acids in an ATP-dependent manner. Catalyzes both inter- and intra-molecular single-stranded DNA (ssDNA) ligation to &gt;50% completion in a matter of hours at an elevated temperature, although favoring intra-molecular ligation on RNA and single-stranded DNA substrates. Is able to catalyze the adenylation reaction of ssDNA 3'-terminal phosphate (ssDNA 3'p) to 3'-adenylated DNA (ssDNA 3'pp5'A). Does not have significant 3'-adenylation activity with a 3'-phosphorylated nicked dsDNA substrate. This chain is RNA ligase 1, found in Thermus scotoductus.